Reading from the N-terminus, the 730-residue chain is MSVLSKYVDRIAEKCEHNGFTKHAFSYALVTSAILALTIKVTIPYVKNVNTTSSVRTQKGKTNGQLSPSTRDSSEEDFKLAEAEKLLVAQQLKKKATNNLVEPGLNKEFLKHLQMLAKIMIPQAFCYETGLLSVHTFCLISRTFLSIYVAALEGALVKFIVRKDIKQFALVLLKWFGIAIPATFVNSMIRFLESKLSLAFRTRLVRHSYRLYFKNQNYYRVSNLDGRIENADHRLTEDISVFANSVAHLYSSLTKPCFDLMLIGLALMRSSKKMKANIITGPALSIGVIALTAHILRIVSPKFGQLVSEEANRYGYLRHIHSRIITNAEEIAFYGGHKVEMQQLRQAYNRLVNQMTTIFNQKLWFIMLEQFFMKYVWSGTGMIMVSLPILTGSDVGLGTVPNTAISESRVSERTQYLTTARNLLISAADAIERLMSSYKEIVSLAGYTFRVAGMMDVFEETALGVYCKTSVMESNQSNGIIEFRNGKPIAKGRIIYSDDPKNMSISLRAVPVVTPNCDIVVPKLTLCIEPGVHLLITGPNGCGKSSLFRILSGLWPIYAGELHIPRPVKDVPCMFYIPQRPYMSIGSLCDQIIYPDTREDMKRKHITENELRSILKMVSLEHIAQRDSFDVVRDWKDILSGGEKQRMAIARLFYHRPRYALLDECTSAVSIDVESSIYEIAKGMGITLLTITHRPTLWKYHTHILEFDGLGNWQFRKMNSDEEQKGQFLS.

The next 4 membrane-spanning stretches (helical) occupy residues 24–44 (AFSY…VTIP), 137–157 (FCLI…GALV), 169–189 (ALVL…NSMI), and 276–296 (ANII…AHIL). An ABC transmembrane type-1 domain is found at 136–373 (TFCLISRTFL…WFIMLEQFFM (238 aa)). Positions 505 to 727 (ISLRAVPVVT…MNSDEEQKGQ (223 aa)) constitute an ABC transporter domain. An ATP-binding site is contributed by 538-545 (GPNGCGKS).

This sequence belongs to the ABC transporter superfamily. ABCD family. Peroxisomal fatty acyl CoA transporter (TC 3.A.1.203) subfamily.

The protein localises to the peroxisome membrane. The enzyme catalyses an acyl-CoA(out) + ATP + H2O = an acyl-CoA(in) + ADP + phosphate + H(+). In terms of biological role, plays a role in the transport of free very-long-chain fatty acids (VLCFAs) as well as their CoA-esters across the peroxisomal membrane by acting as an ATP-specific binding subunit releasing ADP after ATP hydrolysis. Thus, plays a role in regulation of VLCFAs and energy metabolism namely, in the degradation and biosynthesis of fatty acids by beta-oxidation, mitochondrial function and microsomal fatty acid elongation. The polypeptide is ATP-binding cassette sub-family D member 1 (Drosophila melanogaster (Fruit fly)).